Consider the following 599-residue polypeptide: Dictomallein-2 (599 aa).

The first 20 residues, 1 to 20 (MKLILIYLILVFNLFNFINC), serve as a signal peptide directing secretion. Residues 145-407 (PDVGQDYTLK…QNYFKNSIYY (263 aa)) form the Peptidase M66 domain. H298 is a Zn(2+) binding site. E299 is a catalytic residue. Positions 302 and 308 each coordinate Zn(2+).

This sequence belongs to the dictomallein family. Zn(2+) is required as a cofactor.

The protein resides in the secreted. This Dictyostelium discoideum (Social amoeba) protein is Dictomallein-2 (dtmlB).